Reading from the N-terminus, the 238-residue chain is Pyridoxine 5'-phosphate synthase (238 aa).

A 3-amino-2-oxopropyl phosphate-binding site is contributed by Asn-7. 9–10 serves as a coordination point for 1-deoxy-D-xylulose 5-phosphate; it reads DH. Arg-18 provides a ligand contact to 3-amino-2-oxopropyl phosphate. Catalysis depends on His-43, which acts as the Proton acceptor. 2 residues coordinate 1-deoxy-D-xylulose 5-phosphate: Arg-45 and His-50. Glu-70 functions as the Proton acceptor in the catalytic mechanism. Thr-100 contributes to the 1-deoxy-D-xylulose 5-phosphate binding site. His-190 (proton donor) is an active-site residue. 3-amino-2-oxopropyl phosphate-binding positions include Gly-191 and 212–213; that span reads GH.

The protein belongs to the PNP synthase family. In terms of assembly, homooctamer; tetramer of dimers.

It is found in the cytoplasm. The enzyme catalyses 3-amino-2-oxopropyl phosphate + 1-deoxy-D-xylulose 5-phosphate = pyridoxine 5'-phosphate + phosphate + 2 H2O + H(+). It functions in the pathway cofactor biosynthesis; pyridoxine 5'-phosphate biosynthesis; pyridoxine 5'-phosphate from D-erythrose 4-phosphate: step 5/5. In terms of biological role, catalyzes the complicated ring closure reaction between the two acyclic compounds 1-deoxy-D-xylulose-5-phosphate (DXP) and 3-amino-2-oxopropyl phosphate (1-amino-acetone-3-phosphate or AAP) to form pyridoxine 5'-phosphate (PNP) and inorganic phosphate. The protein is Pyridoxine 5'-phosphate synthase of Prochlorococcus marinus (strain MIT 9215).